The sequence spans 92 residues: Small ribosomal subunit protein bS21A (92 aa).

Positions 25–52 (GVFREMKQRRSYEKPSERKTREKSEAIR) are enriched in basic and acidic residues. The interval 25 to 92 (GVFREMKQRR…LPQTAARPAG (68 aa)) is disordered.

It belongs to the bacterial ribosomal protein bS21 family.

This Bradyrhizobium diazoefficiens (strain JCM 10833 / BCRC 13528 / IAM 13628 / NBRC 14792 / USDA 110) protein is Small ribosomal subunit protein bS21A.